The following is a 285-amino-acid chain: 4-diphosphocytidyl-2-C-methyl-D-erythritol kinase (285 aa).

The active site involves lysine 28. 109-119 (PVAAGLGGGSA) serves as a coordination point for ATP. Aspartate 148 is a catalytic residue.

It belongs to the GHMP kinase family. IspE subfamily.

It carries out the reaction 4-CDP-2-C-methyl-D-erythritol + ATP = 4-CDP-2-C-methyl-D-erythritol 2-phosphate + ADP + H(+). The protein operates within isoprenoid biosynthesis; isopentenyl diphosphate biosynthesis via DXP pathway; isopentenyl diphosphate from 1-deoxy-D-xylulose 5-phosphate: step 3/6. Catalyzes the phosphorylation of the position 2 hydroxy group of 4-diphosphocytidyl-2C-methyl-D-erythritol. This chain is 4-diphosphocytidyl-2-C-methyl-D-erythritol kinase, found in Novosphingobium aromaticivorans (strain ATCC 700278 / DSM 12444 / CCUG 56034 / CIP 105152 / NBRC 16084 / F199).